The primary structure comprises 234 residues: MSIQITIDGKTLTTEEGRTLVDVAAENGVYIPTLCYLKDKPCLGTCRVCSVKVNGNVAAACTVRVSKGLNVEVNDPELVDMRKALVEFLFAEGNHNCPSCEKSGRCQLQAVGYEVDMMVSRFPYRFPVRVVDHASEKIWLERDRCIFCQRCVEFIRDKASGRKIFSISHRGPESRIEIDAELANAMPPEQVKEAVAICPVGTILEKRVGYDDPIGRRKYEIQSVRARALEGEDK.

One can recognise a 2Fe-2S ferredoxin-type domain in the interval 2–77 (SIQITIDGKT…GLNVEVNDPE (76 aa)). [2Fe-2S] cluster contacts are provided by Cys35, Cys46, Cys49, and Cys61. The region spanning 77–116 (ELVDMRKALVEFLFAEGNHNCPSCEKSGRCQLQAVGYEVD) is the 4Fe-4S His(Cys)3-ligated-type domain. His95, Cys97, Cys100, Cys106, Cys145, Cys148, Cys151, and Cys198 together coordinate [4Fe-4S] cluster.

This sequence belongs to the complex I 75 kDa subunit family. Tetramer of an alpha and a gamma subunits (flavin-containing dimer), and a delta and a nickel-containing beta subunits (hydrogenase dimer). It depends on [2Fe-2S] cluster as a cofactor. [4Fe-4S] cluster is required as a cofactor.

The protein localises to the cytoplasm. It carries out the reaction H2 + NAD(+) = NADH + H(+). Functionally, subunits alpha and gamma of HoxS constitute an NADH--oxidoreductase. The sequence is that of NAD-reducing hydrogenase HoxS subunit gamma (hoxU) from Cupriavidus necator (strain ATCC 17699 / DSM 428 / KCTC 22496 / NCIMB 10442 / H16 / Stanier 337) (Ralstonia eutropha).